We begin with the raw amino-acid sequence, 397 residues long: Protein-glutamate methylesterase/protein-glutamine glutaminase of group 2 operon (397 aa).

Residues R21–H139 enclose the Response regulatory domain. D72 bears the 4-aspartylphosphate mark. Residues P199–V388 form the CheB-type methylesterase domain. Active-site residues include S213, H241, and D337.

It belongs to the CheB family. In terms of processing, phosphorylated by CheA. Phosphorylation of the N-terminal regulatory domain activates the methylesterase activity.

It is found in the cytoplasm. It carries out the reaction [protein]-L-glutamate 5-O-methyl ester + H2O = L-glutamyl-[protein] + methanol + H(+). The enzyme catalyses L-glutaminyl-[protein] + H2O = L-glutamyl-[protein] + NH4(+). Functionally, involved in chemotaxis. Part of a chemotaxis signal transduction system that modulates chemotaxis in response to various stimuli. Catalyzes the demethylation of specific methylglutamate residues introduced into the chemoreceptors (methyl-accepting chemotaxis proteins or MCP) by CheR. Also mediates the irreversible deamidation of specific glutamine residues to glutamic acid. This is Protein-glutamate methylesterase/protein-glutamine glutaminase of group 2 operon from Bradyrhizobium diazoefficiens (strain JCM 10833 / BCRC 13528 / IAM 13628 / NBRC 14792 / USDA 110).